The chain runs to 361 residues: S-adenosylmethionine decarboxylase proenzyme (361 aa).

Catalysis depends on residues E13 and E16. The Schiff-base intermediate with substrate; via pyruvic acid role is filled by S73. A Pyruvic acid (Ser); by autocatalysis modification is found at S73. C87 (proton donor; for catalytic activity) is an active-site residue. Catalysis depends on proton acceptor; for processing activity residues S236 and H249.

Belongs to the eukaryotic AdoMetDC family. Pyruvate is required as a cofactor. Is synthesized initially as an inactive proenzyme. Formation of the active enzyme involves a self-maturation process in which the active site pyruvoyl group is generated from an internal serine residue via an autocatalytic post-translational modification. Two non-identical subunits are generated from the proenzyme in this reaction, and the pyruvate is formed at the N-terminus of the alpha chain, which is derived from the carboxyl end of the proenzyme. The post-translation cleavage follows an unusual pathway, termed non-hydrolytic serinolysis, in which the side chain hydroxyl group of the serine supplies its oxygen atom to form the C-terminus of the beta chain, while the remainder of the serine residue undergoes an oxidative deamination to produce ammonia and the pyruvoyl group blocking the N-terminus of the alpha chain.

The enzyme catalyses S-adenosyl-L-methionine + H(+) = S-adenosyl 3-(methylsulfanyl)propylamine + CO2. Its pathway is amine and polyamine biosynthesis; S-adenosylmethioninamine biosynthesis; S-adenosylmethioninamine from S-adenosyl-L-methionine: step 1/1. This Nicotiana sylvestris (Wood tobacco) protein is S-adenosylmethionine decarboxylase proenzyme (SAMDC1).